The following is a 175-amino-acid chain: NADH-ubiquinone oxidoreductase chain 6 (175 aa).

The next 6 helical transmembrane spans lie at 1–21 (MMYIVFIMSVLYVVGFIGFSS), 24–44 (SPVYGGMSLIVSGGLGCGIIM), 51–71 (LGLVVFLVYLGGMMVVFGYTI), 87–107 (VVLSAFLVGLLMEIFMIVWLF), 113–133 (LVGFYFGGLEDLVVLGEGSFG), and 148–168 (YGFWFLAMAGWMLFVSIFIAI).

It belongs to the complex I subunit 6 family. In terms of assembly, core subunit of respiratory chain NADH dehydrogenase (Complex I) which is composed of 45 different subunits.

It is found in the mitochondrion inner membrane. The enzyme catalyses a ubiquinone + NADH + 5 H(+)(in) = a ubiquinol + NAD(+) + 4 H(+)(out). Its function is as follows. Core subunit of the mitochondrial membrane respiratory chain NADH dehydrogenase (Complex I) which catalyzes electron transfer from NADH through the respiratory chain, using ubiquinone as an electron acceptor. Essential for the catalytic activity and assembly of complex I. This is NADH-ubiquinone oxidoreductase chain 6 (MT-ND6) from Mammuthus primigenius (Siberian woolly mammoth).